We begin with the raw amino-acid sequence, 679 residues long: Transketolase 10 (679 aa).

Position 40 (His40) interacts with substrate. Residues His80 and 129 to 131 contribute to the thiamine diphosphate site; that span reads GPL. Asp170 contributes to the Mg(2+) binding site. Thiamine diphosphate is bound by residues Gly171 and Asn200. The Mg(2+) site is built by Asn200 and Ile202. The substrate site is built by His277, Arg371, and Ser398. His277 serves as a coordination point for thiamine diphosphate. 2 residues coordinate thiamine diphosphate: Glu425 and Phe452. Glu425 (proton donor) is an active-site residue. 3 residues coordinate substrate: His476, Asp484, and Arg535.

Belongs to the transketolase family. As to quaternary structure, homodimer. Mg(2+) serves as cofactor. Ca(2+) is required as a cofactor. It depends on Mn(2+) as a cofactor. Requires Co(2+) as cofactor. The cofactor is thiamine diphosphate. In terms of tissue distribution, leaves.

It carries out the reaction D-sedoheptulose 7-phosphate + D-glyceraldehyde 3-phosphate = aldehydo-D-ribose 5-phosphate + D-xylulose 5-phosphate. Could be involved in the conversion of sugars, which are a major phenomenon in the rehydration process. Its function is as follows. Catalyzes the transfer of a two-carbon ketol group from a ketose donor to an aldose acceptor, via a covalent intermediate with the cofactor thiamine pyrophosphate. This chain is Transketolase 10 (TKT10), found in Craterostigma plantagineum (Blue gem).